A 606-amino-acid polypeptide reads, in one-letter code: NADH-ubiquinone oxidoreductase chain 5 (606 aa).

16 helical membrane passes run 1–21 (MNPFASLTLTTLIILTIPIMM), 43–63 (AFTLSLVPLLMFMHTGQEMII), 87–107 (VMFIPVALFVTWSIMEFSMWY), 112–132 (PFINRFFKYLVLFLITMMILV), 137–157 (LFQLFIGWEGVGIMSFLLIGW), 171–191 (AILYNRIGDIGFVLSMAWFLT), 213–233 (LIGLLLAAAGKSAQFGLHPWL), 241–261 (TPVSALLHSSTMVVAGVFLLI), 273–293 (VQTMTLCLGAITTLFTALCAI), 301–321 (IVAFSTSSQLGLMMVTIGINQ), 324–344 (LAFLHICMHAFFKAMLFMCSG), 366–386 (MPFTTTALIIGSLALTGMPYL), 407–429 (WALLMTLIATSLTAAYSTRIIFF), 457–477 (LLIGSIFAGFIISNNIPPMTV), 482–502 (MPLYMKMTALIVTIMGFMLAL), and 582–602 (GLIKLYFLSFLITIMISMTLF).

Belongs to the complex I subunit 5 family. As to quaternary structure, core subunit of respiratory chain NADH dehydrogenase (Complex I) which is composed of 45 different subunits.

The protein resides in the mitochondrion inner membrane. The enzyme catalyses a ubiquinone + NADH + 5 H(+)(in) = a ubiquinol + NAD(+) + 4 H(+)(out). Functionally, core subunit of the mitochondrial membrane respiratory chain NADH dehydrogenase (Complex I) which catalyzes electron transfer from NADH through the respiratory chain, using ubiquinone as an electron acceptor. Essential for the catalytic activity and assembly of complex I. In Sus scrofa (Pig), this protein is NADH-ubiquinone oxidoreductase chain 5 (MT-ND5).